Consider the following 115-residue polypeptide: Type 3 secretion system chaperone YscG (115 aa).

Belongs to the YscG family. Component of the heterodimeric YscE-YscG chaperone. The YscE-YscG chaperone forms a stable ternary complex with YscF/SctF.

It localises to the cytoplasm. Functionally, chaperone of the type III secretion system (T3SS), also called injectisome, which is used to inject bacterial effector proteins into eukaryotic host cells. Along with YscE, prevents premature polymerization of the YscF/SctF needle protein within the cytoplasm. Required for Yop secretion. This chain is Type 3 secretion system chaperone YscG, found in Yersinia enterocolitica.